The chain runs to 277 residues: Large ribosomal subunit protein uL2 (277 aa).

Disordered regions lie at residues 37-60 (KNST…GHKH) and 223-265 (VVMN…KRTD). Polar residues predominate over residues 39 to 49 (STAGRNSNGHI). Positions 50-60 (TTRHKGGGHKH) are enriched in basic residues. The segment covering 229 to 244 (DHPHGGGEGRTGEARE) has biased composition (basic and acidic residues).

It belongs to the universal ribosomal protein uL2 family. Part of the 50S ribosomal subunit. Forms a bridge to the 30S subunit in the 70S ribosome.

Functionally, one of the primary rRNA binding proteins. Required for association of the 30S and 50S subunits to form the 70S ribosome, for tRNA binding and peptide bond formation. It has been suggested to have peptidyltransferase activity; this is somewhat controversial. Makes several contacts with the 16S rRNA in the 70S ribosome. The protein is Large ribosomal subunit protein uL2 of Neisseria meningitidis serogroup C (strain 053442).